The chain runs to 255 residues: uncharacterized protein (255 aa).

The a divalent metal cation site is built by His-6, His-8, Glu-92, His-128, His-153, and Asp-203.

It belongs to the metallo-dependent hydrolases superfamily. TatD-type hydrolase family. A divalent metal cation serves as cofactor.

This is an uncharacterized protein from Bacillus subtilis (strain 168).